The primary structure comprises 144 residues: Ribonuclease VapC37 (144 aa).

The region spanning 3 to 137 is the PINc domain; it reads IVDANVLLYA…DFGRFEGVRW (135 aa). Residues Asp5 and Asp90 each contribute to the Mg(2+) site.

Belongs to the PINc/VapC protein family. Mg(2+) is required as a cofactor.

Its subcellular location is the secreted. In terms of biological role, probable toxic component of a type II toxin-antitoxin (TA) system. An RNase. Upon expression in M.smegmatis inhibits colony formation. The putative cognate antitoxin is VapB37. In Mycobacterium tuberculosis (strain ATCC 25618 / H37Rv), this protein is Ribonuclease VapC37.